A 166-amino-acid chain; its full sequence is Large ribosomal subunit protein uL11 (166 aa).

It belongs to the universal ribosomal protein uL11 family.

Functionally, this protein binds directly to 26S ribosomal RNA. The protein is Large ribosomal subunit protein uL11 (RPL12) of Prunus armeniaca (Apricot).